A 540-amino-acid polypeptide reads, in one-letter code: Solute carrier family 2, facilitated glucose transporter member 9 (540 aa).

A disordered region spans residues 1–31; the sequence is MARKQNRNSKELGLVPLTDDTSHAGPPGPGR. The Cytoplasmic segment spans residues 1-51; it reads MARKQNRNSKELGLVPLTDDTSHAGPPGPGRALLECDHLRSGVPGGRRRKD. The residue at position 9 (S9) is a Phosphoserine. The chain crosses the membrane as a helical span at residues 52–72; sequence WSCSLLVASLAGAFGSSFLYG. Residues 73-107 are Extracellular-facing; the sequence is YNLSVVNAPTPYIKAFYNESWERRHGRPIDPDTLT. N90 carries N-linked (GlcNAc...) asparagine glycosylation. Residues 108–128 form a helical membrane-spanning segment; that stretch reads LLWSVTVSIFAIGGLVGTLIV. Topologically, residues 129–140 are cytoplasmic; the sequence is KMIGKVLGRKHT. Residues 141–161 form a helical membrane-spanning segment; sequence LLANNGFAISAALLMACSLQA. Residues 162–171 are Extracellular-facing; the sequence is GAFEMLIVGR. Residues 172–192 traverse the membrane as a helical segment; it reads FIMGIDGGVALSVLPMYLSEI. Topologically, residues 193–200 are cytoplasmic; sequence SPKEIRGS. Residues 201–221 form a helical membrane-spanning segment; that stretch reads LGQVTAIFICIGVFTGQLLGL. Topologically, residues 222–231 are extracellular; that stretch reads PELLGKESTW. The chain crosses the membrane as a helical span at residues 232–252; that stretch reads PYLFGVIVVPAVVQLLSLPFL. Residues 253–316 lie on the Cytoplasmic side of the membrane; sequence PDSPRYLLLE…LLRAPYVRWQ (64 aa). A helical transmembrane segment spans residues 317–337; that stretch reads VVTVIVTMACYQLCGLNAIWF. Residues 338–354 are Extracellular-facing; sequence YTNSIFGKAGIPPAKIP. A helical membrane pass occupies residues 355 to 375; that stretch reads YVTLSTGGIETLAAVFSGLVI. At 376–381 the chain is on the cytoplasmic side; it reads EHLGRR. Residues 382-402 form a helical membrane-spanning segment; that stretch reads PLLIGGFGLMGLFFGTLTITL. Over 403–415 the chain is Extracellular; that stretch reads TLQDHAPWVPYLS. The chain crosses the membrane as a helical span at residues 416–436; sequence IVGILAIIASFCSGPGGIPFI. The Cytoplasmic segment spans residues 437-451; that stretch reads LTGEFFQQSQRPAAF. Residues 452–472 traverse the membrane as a helical segment; it reads IIAGTVNWLSNFAVGLLFPFI. Residues 473 to 478 lie on the Extracellular side of the membrane; sequence QKSLDT. A helical transmembrane segment spans residues 479–499; the sequence is YCFLVFATICITGAIYLYFVL. Topologically, residues 500–540 are cytoplasmic; sequence PETKNRTYAEISQAFSKRNKAYPPEEKIDSAVTDGKINGRP. S515 is modified (phosphoserine). The tract at residues 519-540 is disordered; that stretch reads KAYPPEEKIDSAVTDGKINGRP.

It belongs to the major facilitator superfamily. Sugar transporter (TC 2.A.1.1) family. Glucose transporter subfamily. Most strongly expressed in basolateral membranes of proximal renal tubular cells, liver and placenta. Also detected in lung, blood leukocytes, heart skeletal muscle and chondrocytes from articular cartilage. Detected in kidney membrane (at protein level). As to expression, only detected in the apical membranes of polarized renal tubular cells and placenta. Detected in kidney membrane (at protein level).

It is found in the cell membrane. It localises to the basolateral cell membrane. Its subcellular location is the apical cell membrane. It catalyses the reaction urate(out) = urate(in). Extracellular glucose and urate accelerate urate efflux. Intracellular urate, glucose and fructose accelerate urate influx. With respect to regulation, no effect of extracellular urate, glucose or fructose on urate efflux. Intracellular urate and fructose slightly accelerate urate influx. High-capacity urate transporter, which may play a role in the urate reabsorption by proximal tubules. May have a residual high-affinity, low-capacity glucose and fructose transporter activity. Transports urate at rates 45- to 60-fold faster than glucose. Does not transport galactose. May mediate small uptake of adenine but not of other nucleobases. The sequence is that of Solute carrier family 2, facilitated glucose transporter member 9 from Homo sapiens (Human).